We begin with the raw amino-acid sequence, 445 residues long: 2-oxoisovalerate dehydrogenase subunit alpha, mitochondrial (445 aa).

A mitochondrion-targeting transit peptide spans 1–45 (MAVAIAAARVWRLNRGLSQAALLLLRRPGARGLARSHPRRQQQQF). The segment at 33 to 54 (LARSHPRRQQQQFSSLDDKPQF) is disordered. Positions 158 and 159 each coordinate thiamine diphosphate. K(+) is bound at residue S206. S207 contributes to the thiamine diphosphate binding site. 3 residues coordinate K(+): P208, T211, and Q212. E238 provides a ligand contact to Mg(2+). Positions 239, 240, and 265 each coordinate thiamine diphosphate. N267 and Y269 together coordinate Mg(2+). H336 lines the thiamine diphosphate pocket. At S337 the chain carries Phosphoserine; by BCKDK. Position 338 is a phosphothreonine (T338). Residues S339 and S347 each carry the phosphoserine modification. K356 carries the post-translational modification N6-acetyllysine; alternate. At K356 the chain carries N6-succinyllysine; alternate. Residue K380 is modified to N6-succinyllysine.

It belongs to the BCKDHA family. In terms of assembly, heterotetramer of 2 alpha/BCKDHA and 2 beta chains/BCKDHB that forms the branched-chain alpha-keto acid decarboxylase (E1) component of the BCKD complex. The branched-chain alpha-ketoacid dehydrogenase is a large complex composed of three major building blocks E1, E2 and E3. It is organized around E2, a 24-meric cubic core composed of DBT, to which are associated 6 to 12 copies of E1, and approximately 6 copies of the dehydrogenase E3, a DLD dimer. Interacts with PPM1K. The cofactor is thiamine diphosphate. Mg(2+) serves as cofactor. Phosphorylated at Ser-337 by BCKDK and dephosphorylated by protein phosphatase PPM1K.

The protein resides in the mitochondrion matrix. The enzyme catalyses N(6)-[(R)-lipoyl]-L-lysyl-[protein] + 3-methyl-2-oxobutanoate + H(+) = N(6)-[(R)-S(8)-2-methylpropanoyldihydrolipoyl]-L-lysyl-[protein] + CO2. Its function is as follows. Together with BCKDHB forms the heterotetrameric E1 subunit of the mitochondrial branched-chain alpha-ketoacid dehydrogenase (BCKD) complex. The BCKD complex catalyzes the multi-step oxidative decarboxylation of alpha-ketoacids derived from the branched-chain amino-acids valine, leucine and isoleucine producing CO2 and acyl-CoA which is subsequently utilized to produce energy. The E1 subunit catalyzes the first step with the decarboxylation of the alpha-ketoacid forming an enzyme-product intermediate. A reductive acylation mediated by the lipoylamide cofactor of E2 extracts the acyl group from the E1 active site for the next step of the reaction. This Pan troglodytes (Chimpanzee) protein is 2-oxoisovalerate dehydrogenase subunit alpha, mitochondrial (BCKDHA).